Reading from the N-terminus, the 51-residue chain is DNA-directed RNA polymerase subunit Rpo12 (51 aa).

The Zn(2+) site is built by Cys-14, Cys-29, and Cys-32.

It belongs to the archaeal Rpo12/eukaryotic RPC10 RNA polymerase subunit family. As to quaternary structure, part of the RNA polymerase complex. Zn(2+) is required as a cofactor.

It is found in the cytoplasm. The enzyme catalyses RNA(n) + a ribonucleoside 5'-triphosphate = RNA(n+1) + diphosphate. In terms of biological role, DNA-dependent RNA polymerase (RNAP) catalyzes the transcription of DNA into RNA using the four ribonucleoside triphosphates as substrates. This Methanopyrus kandleri (strain AV19 / DSM 6324 / JCM 9639 / NBRC 100938) protein is DNA-directed RNA polymerase subunit Rpo12.